Reading from the N-terminus, the 125-residue chain is Large ribosomal subunit protein uL18 (125 aa).

The protein belongs to the universal ribosomal protein uL18 family. In terms of assembly, part of the 50S ribosomal subunit; part of the 5S rRNA/L5/L18/L25 subcomplex. Contacts the 5S and 23S rRNAs.

Its function is as follows. This is one of the proteins that bind and probably mediate the attachment of the 5S RNA into the large ribosomal subunit, where it forms part of the central protuberance. In Anaplasma marginale (strain Florida), this protein is Large ribosomal subunit protein uL18.